The primary structure comprises 324 residues: Olfactory receptor 11H4 (324 aa).

Residues 1–35 (MSFFFVDLRPMNRSATHIVTEFILLGFPGCWKIQI) lie on the Extracellular side of the membrane. The N-linked (GlcNAc...) asparagine glycan is linked to asparagine 12. Residues 36-56 (FLFSLFLVIYVLTLLGNGAII) traverse the membrane as a helical segment. Over 57 to 64 (YAVRCNPL) the chain is Cytoplasmic. The chain crosses the membrane as a helical span at residues 65-85 (LHTPMYFLLGNFAFLEIWYVS). Residues 86–109 (STIPNMLVNILSKTKAISFSGCFL) lie on the Extracellular side of the membrane. Residues cysteine 107 and cysteine 199 are joined by a disulfide bond. The chain crosses the membrane as a helical span at residues 110–130 (QFYFFFSLGTTECLFLAVMAY). Residues 131–149 (DRYLAICHPLQYPAIMTVR) lie on the Cytoplasmic side of the membrane. The helical transmembrane segment at 150-170 (FCGKLVSFCWLIGFLGYPIPI) threads the bilayer. The Extracellular segment spans residues 171-207 (FYISQLPFCGPNIIDHFLCDMDPLMALSCAPAPITEC). Residues 208 to 227 (IFYTQSSLVLFFTSMYILRS) form a helical membrane-spanning segment. Over 228–247 (YILLLTAVFQVPSAAGRRKA) the chain is Cytoplasmic. The chain crosses the membrane as a helical span at residues 248 to 268 (FSTCGSHLVVVSLFYGTVMVM). Residues 269-281 (YVSPTYGIPTLLQ) are Extracellular-facing. The chain crosses the membrane as a helical span at residues 282–302 (KILTLVYSVTTPLFNPLIYTL). The Cytoplasmic portion of the chain corresponds to 303 to 324 (RNKDMKLALRNVLFGMRIRQNS).

The protein belongs to the G-protein coupled receptor 1 family.

The protein resides in the cell membrane. Odorant receptor. The protein is Olfactory receptor 11H4 (OR11H4) of Homo sapiens (Human).